The primary structure comprises 283 residues: uncharacterized protein (283 aa).

Helical transmembrane passes span 11–31 (LFAY…YVSA), 35–55 (EGAL…WFGP), 56–76 (IYAL…MMFF), and 93–113 (LVVW…IHDI). A GGDEF domain is found at 162–283 (NSFVFLLLHM…LENEMMMNEL (122 aa)).

The protein resides in the cell membrane. This is an uncharacterized protein from Bacillus subtilis (strain 168).